The following is a 1127-amino-acid chain: uncharacterized protein (1127 aa).

The signal sequence occupies residues 1-26 (MRIHQRSAPCVPVLLFLFLPSAPLCA). A disordered region spans residues 533–600 (ETESLSPPAD…ASSSPSEMAV (68 aa)). Low complexity-rich tracts occupy residues 536-549 (SLSP…TPSP) and 583-599 (AGAS…SEMA). Residues 1076-1126 (SEDEKEYQRALQELQKGNKLVASAVVEQLLQKDRNKKSAKIQQLKKRIDAQ) adopt a coiled-coil conformation.

This is an uncharacterized protein from Treponema pallidum (strain Nichols).